A 522-amino-acid chain; its full sequence is Sugar transport protein MST2 (522 aa).

Residues 1–24 (MAAATAADVAEDTASVYSGKLTLY) are Cytoplasmic-facing. The helical transmembrane segment at 25–45 (VFLTCGVAATGGLIIGYDIGI) threads the bilayer. The Extracellular segment spans residues 46–82 (SGGVTSMDTFLGKFFPSVLHQEQTAQGTSQYCKFNSQ). Residues 83-103 (PLTAFTSSLYLAALVASFFVA) traverse the membrane as a helical segment. At 104 to 111 (SFTRALGR) the chain is on the cytoplasmic side. A helical transmembrane segment spans residues 112-132 (KWSMFGGGVSFLAGATLNGAA). Residues 133 to 134 (RN) are Extracellular-facing. The helical transmembrane segment at 135 to 155 (VAMLIVGRILLGIGVAFCGLS) threads the bilayer. Residues 156–169 (TPIYLSEMAPPRLR) are Cytoplasmic-facing. A helical transmembrane segment spans residues 170–190 (GMLNIGLQLMITVGIFSANLV). Residues 191 to 204 (NYGAAKIRGGWGWR) lie on the Extracellular side of the membrane. Residues 205–225 (VSLGLAAAPACVIAVGSLFLP) form a helical membrane-spanning segment. At 226-291 (DSPSSLINRG…DVLQRRYRPQ (66 aa)) the chain is on the cytoplasmic side. A helical membrane pass occupies residues 292–312 (LAMAVLIPFFQQLTGINVIMF). Over 313 to 329 (YAPVLFKTIGLGGDASL) the chain is Extracellular. The helical transmembrane segment at 330-350 (MSAVITGLVNIVATFVSIATV) threads the bilayer. Residues 351–361 (DSLGRRKLLFQ) are Cytoplasmic-facing. A helical transmembrane segment spans residues 362–382 (GGCQMLVSQVIIGTLIGVVFG). The Extracellular segment spans residues 383–391 (TSGDGNISR). Residues 392–412 (ALAVCIVVFICVYVAGFAWSW) form a helical membrane-spanning segment. Residues 413–434 (GPLGVLLPSEIFPLEVRPAGQS) are Cytoplasmic-facing. A helical membrane pass occupies residues 435-455 (ISVAVNMLCTFAVAEAFLPML). Over 456–459 (CHMR) the chain is Extracellular. A helical transmembrane segment spans residues 460 to 480 (FGLFYFFSGWVLVMTLFVSAF). Residues 481-522 (LPETKGVPIEKMTVVWRTHWFWGRFYCNQDADAHVQVANSKV) lie on the Cytoplasmic side of the membrane.

The protein belongs to the major facilitator superfamily. Sugar transporter (TC 2.A.1.1) family.

The protein localises to the membrane. Mediates active uptake of hexoses by sugar:proton symport. Can transport glucose. In Oryza sativa subsp. japonica (Rice), this protein is Sugar transport protein MST2.